We begin with the raw amino-acid sequence, 791 residues long: MEKMNWLSRLASRVPGHRVPQGASLQTPVMADPETCLMVFKNHWSQVVRILERQGSRAAAGGADDLSAVRNHTYQMLTLLAEDRAVPSAPSGPGPLLEFALREDLLSRVLTWQLQWDEFGDGVEERRAEQLKLFEMLVSEARQPLLRHGPVREALLALLDACGRPVPSSPALDEGLVLLLSQLCVCVAREPSLLEFFLQPPPEPGAAPRLLLFSRLVPFVHREGTLGQQARDALLLLMALSDGSPTVGRYIADHSYFCPVLATGLSALYSSLPRKIEVPGDDWHCLRREDWIGVPALALFMSSLEFCNAVIQVAHPLVQKQLVDYIHNGFLVPVMGPALHKTSVEEMIASTAYLELFLRSISEPALLRTFLRFLLLHRHDTHTILDTLVARIGSNSRLCMVSLSLFRTLLNLSCEDVLLQLVLRYLVPCNHVMLSQKPAVRDVDLYGRAADKFLSLIPRCCRHHAPSPPRPEHASWARGGPSREPGRREDITGPGSPSVDSSSVVTVPRPSTPSRLALFLRQQSLGGSESPGPAPRSPGLTASPTSSPGRRPSPAEEPGPFMAVLFAKLENMLQNSVYVNFLLTGLVAQLACHPQPLLRSFLLNTNMVFQPSVKSLLQVLGSVKNKIESFAASQEDFPALLSKAKKYLIARGKLDWAEGPTAGPTPRRSDSLVRSRRPSLGELLLRHAHSPTRARQAVQVLQPGRDGTGLGLGGGSPGASTPVLLPRGGASERQGEALRVKNAVYCAVIFPEFLKELAAISQAHAVTSPFLLDTSEEVSVPPISGFGPLNP.

2 disordered regions span residues 465 to 510 and 524 to 556; these read APSP…VPRP and SLGG…SPAE. S467 carries the phosphoserine modification. Low complexity predominate over residues 496 to 510; sequence SPSVDSSSVVTVPRP. Residues S524, S537, S543, S547, and S679 each carry the phosphoserine modification. The segment covering 541-552 has biased composition (low complexity); sequence TASPTSSPGRRP. The residue at position 708 (T708) is a Phosphothreonine. A Phosphoserine modification is found at S716.

The protein belongs to the FHIP family. In terms of assembly, component of the FTS/Hook/FHIP complex (FHF complex), composed of AKTIP/FTS, FHIP1B, and one or more members of the Hook family of proteins HOOK1, HOOK2, and HOOK3. The FHF complex associates with the homotypic vesicular sorting complex (the HOPS complex).

Functionally, component of the FTS/Hook/FHIP complex (FHF complex). The FHF complex may function to promote vesicle trafficking and/or fusion via the homotypic vesicular protein sorting complex (the HOPS complex). FHF complex promotes the distribution of AP-4 complex to the perinuclear area of the cell. This is FHF complex subunit HOOK-interacting protein 1B (Fhip1b) from Rattus norvegicus (Rat).